Here is a 727-residue protein sequence, read N- to C-terminus: Pre-B-cell leukemia transcription factor-interacting protein 1 (727 aa).

The segment covering 1–10 has biased composition (polar residues); it reads MASCPDSDNS. The tract at residues 1–169 is disordered; that stretch reads MASCPDSDNS…GREPSSSQPV (169 aa). S131, S142, S143, and S144 each carry phosphoserine. The residue at position 148 (T148) is a Phosphothreonine. The residue at position 164 (S164) is a Phosphoserine. 2 coiled-coil regions span residues 270–350 and 377–405; these read FLLD…RGVD and DPSLLEQHKQLEAEAKALRQELQRQWQLL. Polar residues predominate over residues 446–456; it reads QGINTGRSPND. Disordered stretches follow at residues 446–565 and 694–727; these read QGIN…NSPD and LKKRSRKKEKHSWNPRVVGPREEHSRHPHHYHQG. The span at 473–563 shows a compositional bias: basic and acidic residues; that stretch reads WGGKEKWRGG…QKHSWGKDNS (91 aa). The short motif at 486–506 is the Nuclear localization signal element; that stretch reads QKAEHWKPRKEESGQERQRSW. S563 is modified (phosphoserine). Positions 691-716 match the Nuclear localization signal motif; that stretch reads DKALKKRSRKKEKHSWNPRVVGPREE. A compositionally biased stretch (basic residues) spans 694 to 703; sequence LKKRSRKKEK.

As to quaternary structure, interacts with ESR1, PBX1, PBX2 and PBX3. Interacts with TEX11.

It is found in the cytoplasm. Its subcellular location is the cytoskeleton. The protein localises to the nucleus. Its function is as follows. Regulator of pre-B-cell leukemia transcription factors (BPXs) function. Inhibits the binding of PBX1-HOX complex to DNA and blocks the transcriptional activity of E2A-PBX1. Tethers estrogen receptor-alpha (ESR1) to microtubules and allows them to influence estrogen receptors-alpha signaling. The sequence is that of Pre-B-cell leukemia transcription factor-interacting protein 1 (Pbxip1) from Mus musculus (Mouse).